The primary structure comprises 304 residues: tRNA pseudouridine synthase B (304 aa).

D40 acts as the Nucleophile in catalysis.

Belongs to the pseudouridine synthase TruB family. Type 1 subfamily.

It carries out the reaction uridine(55) in tRNA = pseudouridine(55) in tRNA. Its function is as follows. Responsible for synthesis of pseudouridine from uracil-55 in the psi GC loop of transfer RNAs. This is tRNA pseudouridine synthase B from Halalkalibacterium halodurans (strain ATCC BAA-125 / DSM 18197 / FERM 7344 / JCM 9153 / C-125) (Bacillus halodurans).